Reading from the N-terminus, the 286-residue chain is uncharacterized protein (286 aa).

Residues 1–58 form the HTH lysR-type domain; sequence MLLEGIETLLVLSKEKTMSRTGSQLYISQSAVSKRIANLEKKLGKKLIVPAGRHIKLT. The H-T-H motif DNA-binding region spans 18 to 37; the sequence is MSRTGSQLYISQSAVSKRIA.

Belongs to the LysR transcriptional regulatory family.

This is an uncharacterized protein from Vibrio cholerae serotype O1 (strain ATCC 39315 / El Tor Inaba N16961).